The chain runs to 348 residues: MADSHKINFDPVDIEMEVREDENILDAAFRQGIHLMHGCREGRCSACKSYVLDGEIQMESYSTFACNDAEVDEGYVLLCRSHAFSDCTIELLNFDEDELLGGIPIQDVRTQVQAVEPKTRDIVSLRLKPIEPGKFDFKPGQYADLHIPGTDEHRSFSMATTQSRSDEVEFLIKKYPGGKFSALLDGHIQVGDEIALTGPYGSFTLKDGHVLPVVCIGGGAGMAPILSLLRHMNETENSRPARFYYGARTPADLFYLDEILELGKGIKDFRFIACLSESADGEVPGRVTVEEGMVTDVVARHETAIAKTEVYLCGPPPMVDAALMFLDANCVPKDQVFYDSFTSPIFDQ.

One can recognise a 2Fe-2S ferredoxin-type domain in the interval 5-95 (HKINFDPVDI…DCTIELLNFD (91 aa)). 4 residues coordinate [2Fe-2S] cluster: Cys39, Cys44, Cys47, and Cys79. Positions 105–206 (IQDVRTQVQA…TGPYGSFTLK (102 aa)) constitute an FAD-binding FR-type domain.

Belongs to the bacterial ring-hydroxylating dioxygenase ferredoxin reductase family. As to quaternary structure, the propane 2-monooxygenase multicomponent enzyme system is composed of an electron transfer component and a monooxygenase component interacting with the effector protein MimD. The electron transfer component is composed of a reductase (MimB), and the monooxygenase component is formed by a large subunit (MimA) and a small subunit (MimC). FAD is required as a cofactor. It depends on [2Fe-2S] cluster as a cofactor.

Reductase component of the propane 2-monooxygenase multicomponent enzyme system which is involved in the degradation of propane via the O2-dependent hydroxylation of propane. Reductase catalyzes the transfer of electrons from NADH or NADPH to monooxygenase. This is Propane 2-monooxygenase, reductase component from Mycolicibacterium smegmatis (strain ATCC 700084 / mc(2)155) (Mycobacterium smegmatis).